A 141-amino-acid polypeptide reads, in one-letter code: Hemoglobin subunit alpha (141 aa).

A Globin domain is found at 1 to 141 (VLSAADKSNV…VSTVLTSKYR (141 aa)). At Ser3 the chain carries Phosphoserine. N6-succinyllysine is present on residues Lys7 and Lys11. At Lys16 the chain carries N6-acetyllysine; alternate. Lys16 is subject to N6-succinyllysine; alternate. A Phosphotyrosine modification is found at Tyr24. Ser35 is subject to Phosphoserine. An N6-succinyllysine modification is found at Lys40. A Phosphoserine modification is found at Ser49. His58 lines the O2 pocket. His87 contacts heme b. Ser102 is modified (phosphoserine). Thr108 carries the phosphothreonine modification. Ser124 carries the post-translational modification Phosphoserine. 2 positions are modified to phosphothreonine: Thr134 and Thr137. Position 138 is a phosphoserine (Ser138).

This sequence belongs to the globin family. In terms of assembly, heterotetramer of two alpha chains and two beta chains. Red blood cells.

Involved in oxygen transport from the lung to the various peripheral tissues. In terms of biological role, hemopressin acts as an antagonist peptide of the cannabinoid receptor CNR1. Hemopressin-binding efficiently blocks cannabinoid receptor CNR1 and subsequent signaling. The polypeptide is Hemoglobin subunit alpha (HBA) (Rangifer tarandus (Reindeer)).